A 1576-amino-acid chain; its full sequence is Proton channel OtopLc (1576 aa).

Disordered stretches follow at residues 1–602 and 621–736; these read MDSS…SSPP and QIGS…SSPV. Low complexity-rich tracts occupy residues 58–67 and 76–85; these read SLAEEVLLLV and LLGQPLPTLT. Composition is skewed to acidic residues over residues 103 to 116, 159 to 171, 186 to 198, and 206 to 216; these read DEGD…EPVP, DDGE…DAEE, SNPD…EEQE, and PKEEDEEEDDD. Positions 219–228 are enriched in pro residues; it reads TPPPPLPPLP. Over residues 229–241 the composition is skewed to polar residues; sequence SNFSYVQGHNLGQ. An N-linked (GlcNAc...) asparagine glycan is attached at asparagine 230. The segment covering 243–252 has biased composition (low complexity); sequence TPPLTKSPSN. Residues 253 to 264 are compositionally biased toward pro residues; it reads SPSPPVTPPPCP. N-linked (GlcNAc...) asparagine glycosylation occurs at asparagine 267. Acidic residues predominate over residues 316-341; the sequence is DQPEPEDQPPEPENEPEPEPEPEPEP. Basic and acidic residues predominate over residues 347-356; sequence AREDYSRSLD. Positions 362–376 are enriched in polar residues; the sequence is TTITTPPSNGYSASS. Residues 384–393 show a composition bias toward basic and acidic residues; sequence HFAELDEDRG. The span at 402 to 419 shows a compositional bias: acidic residues; the sequence is QEPEEEVEEEEEEEEEEL. Basic and acidic residues predominate over residues 420 to 433; it reads TKETDEISVDRESL. Over residues 434 to 457 the composition is skewed to polar residues; the sequence is QDQGGDSISSPRPASILTGSISTS. The span at 465–507 shows a compositional bias: low complexity; sequence SPKPESRGPSRSGSQRSQLRSGSQQGSIAESRGGSRIGSRTGS. 2 stretches are compositionally biased toward polar residues: residues 519-534 and 545-555; these read PQAS…SQGQ and KSGSQRMQSPQ. Residues 563–575 show a composition bias toward pro residues; the sequence is MPSPPLMRSPPPE. Positions 661–685 are enriched in low complexity; it reads AAAAPAVTTTAATTAVTSQPRSHFT. The segment covering 686–709 has biased composition (basic residues); it reads SSHHHYHLPHQFQHPHHQNHHTHS. A helical membrane pass occupies residues 741 to 761; it reads LFMAGVAPPIAAGAGSLMAMP. A disordered region spans residues 771-845; that stretch reads GRVSARSGSQ…GSSSQPALSG (75 aa). Polar residues predominate over residues 776 to 799; the sequence is RSGSQHHVTIDESSLPSHKGNIQE. The segment covering 826–839 has biased composition (low complexity); that stretch reads DSSDPPSSPGGSSS. A run of 2 helical transmembrane segments spans residues 891–911 and 931–951; these read ALAT…GIAF and LYLY…LIWG. Polar residues predominate over residues 962-973; sequence PSKSATKASGTD. A disordered region spans residues 962-1001; it reads PSKSATKASGTDSMDESDTDSNSVHHRLPPPIPVRRPSLL. A run of 3 helical transmembrane segments spans residues 1019 to 1039, 1051 to 1071, and 1084 to 1104; these read GAVA…GQYF, LLAL…YFIF, and IIAR…WLNV. Asparagine 1121 carries an N-linked (GlcNAc...) asparagine glycan. Transmembrane regions (helical) follow at residues 1179–1199, 1239–1259, 1272–1292, 1310–1330, 1340–1360, 1381–1401, and 1412–1432; these read FLFP…YVMW, FVGI…FVLI, VTIC…VGMI, ILLV…VIAG, LVPI…MFIL, IVTF…LEKS, and FYGL…AIFY. Asparagine 1479 carries an N-linked (GlcNAc...) asparagine glycan. The disordered stretch occupies residues 1498–1549; the sequence is EEVDSGESNSAEDAGAGAGSGGSRGSGGGAGAAEAGEAGEEGQQGGDSSCGL. Over residues 1503–1512 the composition is skewed to low complexity; sequence GESNSAEDAG. Residues 1513–1528 show a composition bias toward gly residues; the sequence is AGAGSGGSRGSGGGAG.

Belongs to the otopetrin family.

The protein localises to the cell membrane. Its function is as follows. Proton-selective channel that specifically transports protons into cells. Proton-selective channel activity is probably required in cell types that use changes in intracellular pH for cell signaling or to regulate biochemical or developmental processes. The protein is Proton channel OtopLc of Drosophila melanogaster (Fruit fly).